Consider the following 487-residue polypeptide: MTHFIKGQWQAGKGHDVTSSNPANSEIIWRGQTATAEQVNAAVDAAREAQFDWFMLGFDGRLKIVEAYRSQLEANKAELAETIAQETGKPQWETATEVAAMIGKIGLSATAYNKRTGTEANDTPAGRAVLRHKPHGVVAVFGPYNFPGHLPNGHIVPALLAGNTVVFKPSELTPKVAELMVSLWEKAGLPAGVINLVQGEVDTGKALASHPQLDGLFFTGSSRTGHLLHQQYAGHPGKILALEMGGNNPLIIKGVADIKAAVHDILQSAYISSGQRCTCARRLYVEQGEQGDALVAKLVEAVKQIKVGPWNAQPQPFMGSMISEAAAKGMVAAQANLQNLGGVSLVELSHLQAGTGLVSPGLIDVTAVGELPDEEYFGPLLQLVRYSDFDQAIKLANQTRYGLSAGILADSRDDYEYFLARIRAGIVNWNKQITGASGAAPFGGVGASGNHRASAFYAADYCAYPVASVEADAVSLPASLSPGLSLE.

The segment at 1 to 23 (MTHFIKGQWQAGKGHDVTSSNPA) is disordered. NAD(+) is bound at residue 220-225 (GSSRTG). Catalysis depends on residues Glu243 and Cys277.

This sequence belongs to the aldehyde dehydrogenase family. AstD subfamily.

It catalyses the reaction N-succinyl-L-glutamate 5-semialdehyde + NAD(+) + H2O = N-succinyl-L-glutamate + NADH + 2 H(+). Its pathway is amino-acid degradation; L-arginine degradation via AST pathway; L-glutamate and succinate from L-arginine: step 4/5. Functionally, catalyzes the NAD-dependent reduction of succinylglutamate semialdehyde into succinylglutamate. This Shewanella sp. (strain ANA-3) protein is N-succinylglutamate 5-semialdehyde dehydrogenase.